The chain runs to 679 residues: MNNYKLQAPYEPNGDQPEAIKKLVKGVNTGKEFQTLLGATGTGKTFTIANVIQQTGRPALVLAHNKTLAAQLCNELREFFPKNAVEYFISYYDYYQPEAYVPVSDTYIAKTASINEEIDMLRHSATRSLFERKDVIVVASISCIYGLGIPSEYLKAAVKFEVGKSINLRSYLRSLVENQYTRNDIEITRGRFRIKGDVLEIGPAYEDRLIRIELFGDEVEAIRYVDPTTGEILESLEQVSVYPAKHFVTPKERLESAISAIRSELKTQLDKFTYEGKLLEAQRLEQRTKYDLEMLKEVGYCNGVENYARHLSGREEGSPPECLIDYFPKDWLLVVDESHVTCPQLHAMYNGDQSRKKVLIDHGFRLPSAADNRPLKCEEFWEKSKQTLFISATPGQWELDQCDGEFIEQVIRPTGVLDPVIDVRPSEGQIEDLLSEIRIRAEKNQRVLVTTLTKRMAEDLTDFLSENKVRVRYLHSEIHSIERIEIIQDLRMGEYDVLVGVNLLREGLDLPEVSLVAILDADKEGFLRAERSLIQTIGRAARHVEGVALLYADNFTDSMKRAISETERRRTIQKKYNQVNGITPKPAGKKIENSILSFLELSRKLDAGGLSKDLINIVNNKTDAILGSSDNQCLLEELPDLIEKLEIKMKDAAKELNFEEAANLRDRIKKLRQKLARNN.

The 152-residue stretch at 25-176 folds into the Helicase ATP-binding domain; sequence KGVNTGKEFQ…NLRSYLRSLV (152 aa). 38–45 serves as a coordination point for ATP; it reads GATGTGKT. The Beta-hairpin signature appears at 91 to 114; sequence YYDYYQPEAYVPVSDTYIAKTASI. The Helicase C-terminal domain maps to 429-583; sequence QIEDLLSEIR…KKYNQVNGIT (155 aa). Residues 639–674 form the UVR domain; it reads PDLIEKLEIKMKDAAKELNFEEAANLRDRIKKLRQK.

The protein belongs to the UvrB family. In terms of assembly, forms a heterotetramer with UvrA during the search for lesions. Interacts with UvrC in an incision complex.

It is found in the cytoplasm. Its function is as follows. The UvrABC repair system catalyzes the recognition and processing of DNA lesions. A damage recognition complex composed of 2 UvrA and 2 UvrB subunits scans DNA for abnormalities. Upon binding of the UvrA(2)B(2) complex to a putative damaged site, the DNA wraps around one UvrB monomer. DNA wrap is dependent on ATP binding by UvrB and probably causes local melting of the DNA helix, facilitating insertion of UvrB beta-hairpin between the DNA strands. Then UvrB probes one DNA strand for the presence of a lesion. If a lesion is found the UvrA subunits dissociate and the UvrB-DNA preincision complex is formed. This complex is subsequently bound by UvrC and the second UvrB is released. If no lesion is found, the DNA wraps around the other UvrB subunit that will check the other stand for damage. The polypeptide is UvrABC system protein B (Prochlorococcus marinus (strain MIT 9301)).